The following is a 426-amino-acid chain: Trophoblast glycoprotein (426 aa).

The first 31 residues, 1-31 (MPGAGSRGPSAGDGRLRLARLALVLLGWVSA), serve as a signal peptide directing secretion. Topologically, residues 32–361 (SAPSSSVPSS…AVLPQSLQTS (330 aa)) are extracellular. Over residues 33-47 (APSSSVPSSSTSPAA) the composition is skewed to low complexity. The disordered stretch occupies residues 33–53 (APSSSVPSSSTSPAAFLASGS). Residues 53-91 (SAQPPPAERCPAACECSEAARTVKCVNRNLLEVPADLPP) enclose the LRRNT domain. 2 disulfides stabilise this stretch: Cys-62–Cys-68 and Cys-66–Cys-77. 7 LRR repeats span residues 92 to 113 (YVRN…AFAR), 116 to 139 (PLAD…GAFE), 141 to 163 (LPGL…FAFA), 172 to 210 (PSPL…AALR), 215 to 238 (LRGL…LLAQ), 239 to 261 (LPSL…ASFR), and 262 to 281 (NLTH…VLHN). Residue Asn-124 is glycosylated (N-linked (GlcNAc...) asparagine). Asn-281 is a glycosylation site (N-linked (GlcNAc...) asparagine). Residues 289-352 (GLAHVKVFLD…LNSSDLDCDA (64 aa)) enclose the LRRCT domain. 2 disulfide bridges follow: Cys-304/Cys-329 and Cys-306/Cys-350. Residues 362–382 (YVFLGIVLALIGAIFLLVLYL) traverse the membrane as a helical segment. Residues 383–426 (NRKGIKKWMHNIRDACRDHMEGYHYRYEINADPRLTNLSSNSDV) lie on the Cytoplasmic side of the membrane. Ser-424 carries the post-translational modification Phosphoserine.

Highly glycosylated. As to expression, highly expressed in embryo and placenta. In adult, expressed only in brain and ovary. Not detected in kidney small intestine, heart, spleen, testis, liver, lung, thymus and stomach.

It is found in the cell membrane. Its function is as follows. May function as an inhibitor of Wnt/beta-catenin signaling by indirectly interacting with LRP6 and blocking Wnt3a-dependent LRP6 internalization. The chain is Trophoblast glycoprotein (Tpbg) from Mus musculus (Mouse).